Consider the following 232-residue polypeptide: Noggin (232 aa).

Residues 1–27 (MERCPSLGVTLYALVVVLGLRAAPAGG) form the signal peptide. N-linked (GlcNAc...) asparagine glycosylation is present at Asn62. A disordered region spans residues 77-99 (GFMATSPPEDRPGGGGGPAGGAE). Intrachain disulfides connect Cys155–Cys192, Cys178–Cys228, Cys184–Cys230, and Cys207–Cys215.

The protein belongs to the noggin family. In terms of assembly, homodimer. Interacts with GDF5; inhibits chondrocyte differentiation. As to expression, expressed in condensing cartilage and immature chondrocytes.

Its subcellular location is the secreted. Functionally, essential for cartilage morphogenesis and joint formation. Inhibitor of bone morphogenetic proteins (BMP) signaling which is required for growth and patterning of the neural tube and somite. Inhibits chondrocyte differentiation through its interaction with GDF5 and, probably, GDF6. The chain is Noggin (Nog) from Mus musculus (Mouse).